The primary structure comprises 40 residues: Dolichyl-diphosphooligosaccharide--protein glycosyltransferase subunit 4 (40 aa).

Over 1–4 (MISD) the chain is Lumenal. The chain crosses the membrane as a helical span at residues 5-25 (VQLAIFSNVLGVFLFLLVVAY). At 26–40 (HYINANTGKPSAKAK) the chain is on the cytoplasmic side.

Belongs to the OST4 family. As to quaternary structure, component of the oligosaccharyltransferase (OST) complex.

It localises to the endoplasmic reticulum membrane. Subunit of the oligosaccharyl transferase (OST) complex that catalyzes the initial transfer of a defined glycan (Glc(3)Man(9)GlcNAc(2) in eukaryotes) from the lipid carrier dolichol-pyrophosphate to an asparagine residue within an Asn-X-Ser/Thr consensus motif in nascent polypeptide chains, the first step in protein N-glycosylation. N-glycosylation occurs cotranslationally and the complex associates with the Sec61 complex at the channel-forming translocon complex that mediates protein translocation across the endoplasmic reticulum (ER). All subunits are required for a maximal enzyme activity. The chain is Dolichyl-diphosphooligosaccharide--protein glycosyltransferase subunit 4 from Drosophila yakuba (Fruit fly).